A 343-amino-acid chain; its full sequence is Insertion element IS630 uncharacterized 39 kDa protein (343 aa).

In Shigella sonnei, this protein is Insertion element IS630 uncharacterized 39 kDa protein.